The following is a 396-amino-acid chain: NADH-quinone oxidoreductase subunit D 1 (396 aa).

The protein belongs to the complex I 49 kDa subunit family. In terms of assembly, NDH-1 is composed of 14 different subunits. Subunits NuoB, C, D, E, F, and G constitute the peripheral sector of the complex.

The protein localises to the cell inner membrane. It carries out the reaction a quinone + NADH + 5 H(+)(in) = a quinol + NAD(+) + 4 H(+)(out). In terms of biological role, NDH-1 shuttles electrons from NADH, via FMN and iron-sulfur (Fe-S) centers, to quinones in the respiratory chain. The immediate electron acceptor for the enzyme in this species is believed to be ubiquinone. Couples the redox reaction to proton translocation (for every two electrons transferred, four hydrogen ions are translocated across the cytoplasmic membrane), and thus conserves the redox energy in a proton gradient. The chain is NADH-quinone oxidoreductase subunit D 1 from Nitrobacter hamburgensis (strain DSM 10229 / NCIMB 13809 / X14).